Consider the following 317-residue polypeptide: Succinate receptor 1 (317 aa).

Residues 1–27 lie on the Extracellular side of the membrane; it reads MAQNLSCENWLALENILKKYYLSAFYG. An N-linked (GlcNAc...) asparagine glycan is attached at Asn4. A helical transmembrane segment spans residues 28 to 48; it reads IEFIVGMLGNFTVVFGYLFCM. The Cytoplasmic portion of the chain corresponds to 49-55; it reads KNWNSSN. The chain crosses the membrane as a helical span at residues 56–76; it reads VYLFNLSISDLAFLCTLPMLI. Residues 77–99 lie on the Extracellular side of the membrane; it reads RSYATGNWTYGDVLCISNRYVLH. Cysteines 91 and 168 form a disulfide. A helical membrane pass occupies residues 100-120; it reads ANLYTSILFLTFISIDRYLLM. The Cytoplasmic portion of the chain corresponds to 121-133; that stretch reads KFPFREHILQKKE. A helical transmembrane segment spans residues 134–154; it reads FAILISLAVWVLVTLEVLPML. The Extracellular portion of the chain corresponds to 155-181; sequence TFITSTPIEKGDSCVDYASSGNPKYSL. Residues 182–202 traverse the membrane as a helical segment; it reads IYSLCLTLLGFLIPLSVMCFF. Topologically, residues 203-226 are cytoplasmic; the sequence is YYKMVVFLKKRSQQQATVLSLNKP. A helical membrane pass occupies residues 227-247; the sequence is LRLVVLAVVIFSVLFTPYHIM. Over 248-276 the chain is Extracellular; that stretch reads RNVRIASRLDSWPQGCSQKAIKCLYILTR. Residues 277–297 form a helical membrane-spanning segment; the sequence is PLAFLNSAVNPIFYFLVGDHF. Residues 298–317 lie on the Cytoplasmic side of the membrane; sequence RDMLFSKLRQYFKSLTSFRL.

This sequence belongs to the G-protein coupled receptor 1 family. In terms of tissue distribution, expressed in retina.

It localises to the cell membrane. G protein-coupled receptor for succinate able to mediate signaling through Gq/GNAQ or Gi/GNAI second messengers depending on the cell type and the processes regulated. Succinate-SUCNR1 signaling serves as a link between metabolic stress, inflammation and energy homeostasisn. In macrophages, plays a range of immune-regulatory roles. During inflammation, succinate-SUCNR1 signaling may act as an anti-inflammatory mediator or boost inflammation depending on the inflammatory status of cells. Hyperpolarizes M2 macrophages versus M1 phenotype through Gq signaling by regulating the transcription of genes involved in immune function. In activated M1 macrophages, plays a pro-inflammatory role in response to LPS. Expressed in dendritic cells, where it is involved in the sensing of immunological danger and enhances immunity. Mediates succinate triggered intracelleular calcium mobilization, induces migratory responses and acts in synergy with Toll-like receptor ligands for the production of proinflammatory cytokines as well as an enhancement of antigen-specific activation of helper T cells. In the small intestine, mediates the activation of tuft cells by dietary succinate and triggers type 2 immunity. In adipocytes, plays an important role in the control of energy metabolism. In response to succinate, controls leptin expression in an AMPK-JNK-CEBPA-dependent as well as circadian clock-regulated manner. In muscle tissue, is expressed in non-muscle cells and coordinates muscle remodeling in response to the succinate produced during exercise training in a paracrine manner. In retina, acts as a mediator of vessel growth during retinal development. In response to succinate, regulates the production of angiogenic factors, including VEGF, by retinal ganglion neurons. This is Succinate receptor 1 (Sucnr1) from Rattus norvegicus (Rat).